Consider the following 214-residue polypeptide: ATP-dependent Clp protease proteolytic subunit (214 aa).

Ser106 acts as the Nucleophile in catalysis. His131 is an active-site residue.

This sequence belongs to the peptidase S14 family. Fourteen ClpP subunits assemble into 2 heptameric rings which stack back to back to give a disk-like structure with a central cavity, resembling the structure of eukaryotic proteasomes.

It is found in the cytoplasm. The catalysed reaction is Hydrolysis of proteins to small peptides in the presence of ATP and magnesium. alpha-casein is the usual test substrate. In the absence of ATP, only oligopeptides shorter than five residues are hydrolyzed (such as succinyl-Leu-Tyr-|-NHMec, and Leu-Tyr-Leu-|-Tyr-Trp, in which cleavage of the -Tyr-|-Leu- and -Tyr-|-Trp bonds also occurs).. Its function is as follows. Cleaves peptides in various proteins in a process that requires ATP hydrolysis. Has a chymotrypsin-like activity. Plays a major role in the degradation of misfolded proteins. The sequence is that of ATP-dependent Clp protease proteolytic subunit from Rhodopseudomonas palustris (strain BisB5).